The primary structure comprises 469 residues: Serine hydroxymethyltransferase, cytosolic (469 aa).

An N6-(pyridoxal phosphate)lysine modification is found at Lys-248.

It belongs to the SHMT family. Homotetramer. The cofactor is pyridoxal 5'-phosphate.

The protein localises to the cytoplasm. It carries out the reaction (6R)-5,10-methylene-5,6,7,8-tetrahydrofolate + glycine + H2O = (6S)-5,6,7,8-tetrahydrofolate + L-serine. It participates in one-carbon metabolism; tetrahydrofolate interconversion. Interconversion of serine and glycine. This Eremothecium gossypii (strain ATCC 10895 / CBS 109.51 / FGSC 9923 / NRRL Y-1056) (Yeast) protein is Serine hydroxymethyltransferase, cytosolic (SHM2).